Consider the following 224-residue polypeptide: MAITDWPEDERPREKLLARGAQALSDAELLAIFLRTGQQGLTAVDLARRQLVSSGGLRAMLDLSPERMAHLPGMGVARRALLLAALELGRRYLAEPLERGLPLDNPDKAGQLLTAQLRGLPFEVFACLFLDNKHRLIAFEKLFQGTIDAAAVYPREVVRRAMEHNAAAVILAHNHPSGVAEPSQSDHAITRRLVEALGLVEVRVLDHLVIGDGGWVSLASRGAV.

Residues 102 to 224 (PLDNPDKAGQ…WVSLASRGAV (123 aa)) form the MPN domain. Positions 173, 175, and 186 each coordinate Zn(2+). Residues 173–186 (HNHPSGVAEPSQSD) carry the JAMM motif motif.

This sequence belongs to the UPF0758 family.

The chain is UPF0758 protein ABO_0214 from Alcanivorax borkumensis (strain ATCC 700651 / DSM 11573 / NCIMB 13689 / SK2).